We begin with the raw amino-acid sequence, 359 residues long: MMTQPNLNIVPFVSVDHMMKLVLRVGVETFLKELAGYVEEDFRRWQNFDKTPRVASHSKEGVIELMPTSDGTLYGFKYVNGHPKNTRDGLQTVTAFGVLADVGSGYPMLLTEMTILTALRTAATSAVAAKHLAPKNARTMAIIGNGAQSEFQALAFKAILGVDKLRLYDLDPQATAKCIRNLQGAGFNIVACKSVEEAVEGADIITTVTADKANATILTDNMVGAGVHINAVGGDCSGKTELHGDILRRSDIFVEYPPQTRIEGEIQQLPEDYPVNELWEVITGRIAGRKDARQITLFDSVGFATEDFSALRYVRDKLKDTGLYEQLDLLADPDEPRDLYGMLLRHEKLLQSESTKPAA.

The L-ornithine site is built by R53 and K77. Residues T92, R120, 147 to 148, D169, T209, 232 to 235, K239, and S300 contribute to the NAD(+) site; these read AQ and VGGD. Residue R120 coordinates L-ornithine. D235 provides a ligand contact to L-ornithine. The active-site Proton donor/acceptor is the D235. Position 301 (V301) interacts with L-ornithine.

Belongs to the ornithine cyclodeaminase/mu-crystallin family. NAD(+) serves as cofactor.

It carries out the reaction L-ornithine = L-proline + NH4(+). Its pathway is amino-acid biosynthesis; L-proline biosynthesis; L-proline from L-ornithine: step 1/1. Functionally, catalyzes the conversion of L-ornithine into L-proline with release of ammonia. This chain is Ornithine cyclodeaminase, found in Brucella abortus biovar 1 (strain 9-941).